The sequence spans 306 residues: Homoserine kinase (306 aa).

An ATP-binding site is contributed by 91 to 101; sequence PLARGLGSSAA.

It belongs to the GHMP kinase family. Homoserine kinase subfamily.

The protein resides in the cytoplasm. The enzyme catalyses L-homoserine + ATP = O-phospho-L-homoserine + ADP + H(+). The protein operates within amino-acid biosynthesis; L-threonine biosynthesis; L-threonine from L-aspartate: step 4/5. In terms of biological role, catalyzes the ATP-dependent phosphorylation of L-homoserine to L-homoserine phosphate. The chain is Homoserine kinase from Bacillus licheniformis (strain ATCC 14580 / DSM 13 / JCM 2505 / CCUG 7422 / NBRC 12200 / NCIMB 9375 / NCTC 10341 / NRRL NRS-1264 / Gibson 46).